We begin with the raw amino-acid sequence, 528 residues long: Calcium-dependent protein kinase 13 (528 aa).

A lipid anchor (N-myristoyl glycine) is attached at glycine 2. Over residues 17–32 (KSNYSGHDHARKDAAG) the composition is skewed to basic and acidic residues. The tract at residues 17 to 37 (KSNYSGHDHARKDAAGGKKSA) is disordered. A Phosphoserine modification is found at serine 43. The region spanning 54–312 (YLLDRELGRG…AKQVLEHPWI (259 aa)) is the Protein kinase domain. ATP contacts are provided by residues 60–68 (LGRGEFGVT) and lysine 83. Residue aspartate 178 is the Proton acceptor of the active site. The residue at position 218 (serine 218) is a Phosphoserine. The interval 318 to 348 (APNVPLGDVVKSRLKQFSVMNRFKRKALRVI) is autoinhibitory domain. 4 consecutive EF-hand domains span residues 355 to 390 (EEVEDIKVMFNKMDTDNDGIVSIEELKAGLRDFSTQ), 391 to 426 (LAESEVQMLIEAVDTKGKGTLDYGEFVAVSLHLQKV), 427 to 462 (ANDEHLRKAFSYFDKDGNGYILPQELCDALKEDGGD), and 463 to 498 (DCVDVANDIFQEVDTDKDGRISYEEFAAMMKTGTDW). 16 residues coordinate Ca(2+): aspartate 368, aspartate 370, aspartate 372, glutamate 379, aspartate 404, threonine 410, glutamate 415, aspartate 440, aspartate 442, asparagine 444, tyrosine 446, glutamate 451, aspartate 476, aspartate 478, aspartate 480, and arginine 482. Serine 484 carries the post-translational modification Phosphoserine. Glutamate 487 contributes to the Ca(2+) binding site. Serine 522 is subject to Phosphoserine.

It belongs to the protein kinase superfamily. Ser/Thr protein kinase family. CDPK subfamily.

It localises to the cell membrane. It carries out the reaction L-seryl-[protein] + ATP = O-phospho-L-seryl-[protein] + ADP + H(+). It catalyses the reaction L-threonyl-[protein] + ATP = O-phospho-L-threonyl-[protein] + ADP + H(+). Its activity is regulated as follows. Activated by calcium. Autophosphorylation may play an important role in the regulation of the kinase activity. In terms of biological role, may play a role in signal transduction pathways that involve calcium as a second messenger. The protein is Calcium-dependent protein kinase 13 (CPK13) of Arabidopsis thaliana (Mouse-ear cress).